A 67-amino-acid chain; its full sequence is Large ribosomal subunit protein uL29 (67 aa).

The protein belongs to the universal ribosomal protein uL29 family.

The polypeptide is Large ribosomal subunit protein uL29 (Sorangium cellulosum (strain So ce56) (Polyangium cellulosum (strain So ce56))).